A 445-amino-acid chain; its full sequence is Gamma conglutin 2 (445 aa).

The signal sequence occupies residues 1-33 (MAQNMAPIFHFIAISLSCSFLFVLSSSQDSQSL). The region spanning 60 to 425 (HWANIHKRTP…DFAKSRVEFN (366 aa)) is the Peptidase A1 domain. 5 disulfide bridges follow: Cys-88–Cys-178, Cys-102–Cys-115, Cys-107–Cys-133, Cys-118–Cys-128, and Cys-346–Cys-387. N-linked (GlcNAc...) asparagine glycosylation is present at Asn-130.

It belongs to the peptidase A1 family. Two-subunit monomeric unit made of alpha and beta subunits coupled by disulfide bonds (at pH 4.5 and under non-reducing conditions). Can also form oligomers including dimer, tetramer and cyclic hexamer (trimer of dimers) (at pH &gt; 5.5). Component of globulins complexes which accumulate in seeds. Interacts with flavonoids (e.g. apigenin glucosides) present in globulins complexes. Post-translationally, glycosylated on alpha chain.

The protein localises to the secreted. Its subcellular location is the extracellular space. Functionally, sulfur-rich seed storage protein that remains undegraded at germination. In Lupinus angustifolius (Narrow-leaved blue lupine), this protein is Gamma conglutin 2.